We begin with the raw amino-acid sequence, 223 residues long: Flagellar L-ring protein 2 (223 aa).

Positions 1–17 (MKWLSKSWAVAVVLLVG) are cleaved as a signal peptide. Residue cysteine 18 is the site of N-palmitoyl cysteine attachment. Residue cysteine 18 is the site of S-diacylglycerol cysteine attachment.

This sequence belongs to the FlgH family. As to quaternary structure, the basal body constitutes a major portion of the flagellar organelle and consists of four rings (L,P,S, and M) mounted on a central rod.

Its subcellular location is the cell outer membrane. It localises to the bacterial flagellum basal body. In terms of biological role, assembles around the rod to form the L-ring and probably protects the motor/basal body from shearing forces during rotation. This is Flagellar L-ring protein 2 from Vibrio parahaemolyticus serotype O3:K6 (strain RIMD 2210633).